The sequence spans 404 residues: S-adenosylmethionine synthase (404 aa).

Residue 141–146 coordinates ATP; that stretch reads GQGSVD.

Belongs to the AdoMet synthase 2 family. Mg(2+) serves as cofactor.

It carries out the reaction L-methionine + ATP + H2O = S-adenosyl-L-methionine + phosphate + diphosphate. It functions in the pathway amino-acid biosynthesis; S-adenosyl-L-methionine biosynthesis; S-adenosyl-L-methionine from L-methionine: step 1/1. Catalyzes the formation of S-adenosylmethionine from methionine and ATP. In Methanococcus vannielii (strain ATCC 35089 / DSM 1224 / JCM 13029 / OCM 148 / SB), this protein is S-adenosylmethionine synthase.